Reading from the N-terminus, the 945-residue chain is Isoleucine--tRNA ligase (945 aa).

The 'HIGH' region signature appears at 66–76 (PYANGDIHLGH). Glu-581 contacts L-isoleucyl-5'-AMP. The 'KMSKS' region signature appears at 622-626 (KMSKS). Lys-625 is an ATP binding site. Residues Cys-908, Cys-911, Cys-928, and Cys-931 each contribute to the Zn(2+) site.

This sequence belongs to the class-I aminoacyl-tRNA synthetase family. IleS type 1 subfamily. In terms of assembly, monomer. Zn(2+) serves as cofactor.

The protein localises to the cytoplasm. It carries out the reaction tRNA(Ile) + L-isoleucine + ATP = L-isoleucyl-tRNA(Ile) + AMP + diphosphate. Catalyzes the attachment of isoleucine to tRNA(Ile). As IleRS can inadvertently accommodate and process structurally similar amino acids such as valine, to avoid such errors it has two additional distinct tRNA(Ile)-dependent editing activities. One activity is designated as 'pretransfer' editing and involves the hydrolysis of activated Val-AMP. The other activity is designated 'posttransfer' editing and involves deacylation of mischarged Val-tRNA(Ile). This chain is Isoleucine--tRNA ligase, found in Paraburkholderia phymatum (strain DSM 17167 / CIP 108236 / LMG 21445 / STM815) (Burkholderia phymatum).